The sequence spans 149 residues: SsrA-binding protein (149 aa).

Belongs to the SmpB family.

Its subcellular location is the cytoplasm. Functionally, required for rescue of stalled ribosomes mediated by trans-translation. Binds to transfer-messenger RNA (tmRNA), required for stable association of tmRNA with ribosomes. tmRNA and SmpB together mimic tRNA shape, replacing the anticodon stem-loop with SmpB. tmRNA is encoded by the ssrA gene; the 2 termini fold to resemble tRNA(Ala) and it encodes a 'tag peptide', a short internal open reading frame. During trans-translation Ala-aminoacylated tmRNA acts like a tRNA, entering the A-site of stalled ribosomes, displacing the stalled mRNA. The ribosome then switches to translate the ORF on the tmRNA; the nascent peptide is terminated with the 'tag peptide' encoded by the tmRNA and targeted for degradation. The ribosome is freed to recommence translation, which seems to be the essential function of trans-translation. The polypeptide is SsrA-binding protein (Fervidobacterium nodosum (strain ATCC 35602 / DSM 5306 / Rt17-B1)).